Here is a 291-residue protein sequence, read N- to C-terminus: Putative transport permease ycf38 (291 aa).

6 helical membrane passes run 47–67, 87–107, 135–155, 165–185, 195–215, and 262–282; these read ATLMAGIIQPLLWLILFGGLF, SGIIIFTSFTGALNSGLPLMF, FMTCISLIQVVFIVTASLFMG, MIFGLMILLVTVGVTMLSLAL, LLAFILVVNLPFLFSSTALAP, and ICLGQIIILLIALDIMAAYLV. Residues 47–289 form the ABC transmembrane type-2 domain; the sequence is ATLMAGIIQP…YLVSNILKAK (243 aa).

The protein belongs to the ABC-2 integral membrane protein family.

The protein resides in the plastid. It is found in the chloroplast membrane. In Pyropia yezoensis (Susabi-nori), this protein is Putative transport permease ycf38 (ycf38).